The chain runs to 213 residues: Imidazole glycerol phosphate synthase subunit HisH (213 aa).

The Glutamine amidotransferase type-1 domain maps to 4 to 213 (SIAIVDYGMG…LYRNFVHWKP (210 aa)). The active-site Nucleophile is the Cys-83. Active-site residues include His-193 and Glu-195.

As to quaternary structure, heterodimer of HisH and HisF.

The protein localises to the cytoplasm. It carries out the reaction 5-[(5-phospho-1-deoxy-D-ribulos-1-ylimino)methylamino]-1-(5-phospho-beta-D-ribosyl)imidazole-4-carboxamide + L-glutamine = D-erythro-1-(imidazol-4-yl)glycerol 3-phosphate + 5-amino-1-(5-phospho-beta-D-ribosyl)imidazole-4-carboxamide + L-glutamate + H(+). The enzyme catalyses L-glutamine + H2O = L-glutamate + NH4(+). The protein operates within amino-acid biosynthesis; L-histidine biosynthesis; L-histidine from 5-phospho-alpha-D-ribose 1-diphosphate: step 5/9. Functionally, IGPS catalyzes the conversion of PRFAR and glutamine to IGP, AICAR and glutamate. The HisH subunit catalyzes the hydrolysis of glutamine to glutamate and ammonia as part of the synthesis of IGP and AICAR. The resulting ammonia molecule is channeled to the active site of HisF. The protein is Imidazole glycerol phosphate synthase subunit HisH of Burkholderia lata (strain ATCC 17760 / DSM 23089 / LMG 22485 / NCIMB 9086 / R18194 / 383).